Reading from the N-terminus, the 197-residue chain is Putative rho GDP-dissociation inhibitor 1 (197 aa).

It belongs to the Rho GDI family. Interacts with rac1A, rac1B, rac1C, racB, raCC and RacE.

The protein resides in the cytoplasm. Its function is as follows. Regulates the GDP/GTP exchange reaction of the Rho proteins by inhibiting the dissociation of GDP from them, and the subsequent binding of GTP to them. Regulates the Rac-dependent signaling pathways controlling cytokinesis, actin reorganization and the contractile vacuole. Required for efficient accumulation of cap at the cell cortex. The polypeptide is Putative rho GDP-dissociation inhibitor 1 (rdiA) (Dictyostelium discoideum (Social amoeba)).